We begin with the raw amino-acid sequence, 128 residues long: Centrosomal protein 15 (128 aa).

The protein resides in the cell projection. It is found in the cilium. Functionally, may play a role in ciliary assembly. This Bos taurus (Bovine) protein is Centrosomal protein 15 (CEP15).